A 502-amino-acid polypeptide reads, in one-letter code: Aspartyl/glutamyl-tRNA(Asn/Gln) amidotransferase subunit B (502 aa).

The protein belongs to the GatB/GatE family. GatB subfamily. As to quaternary structure, heterotrimer of A, B and C subunits.

The enzyme catalyses L-glutamyl-tRNA(Gln) + L-glutamine + ATP + H2O = L-glutaminyl-tRNA(Gln) + L-glutamate + ADP + phosphate + H(+). The catalysed reaction is L-aspartyl-tRNA(Asn) + L-glutamine + ATP + H2O = L-asparaginyl-tRNA(Asn) + L-glutamate + ADP + phosphate + 2 H(+). In terms of biological role, allows the formation of correctly charged Asn-tRNA(Asn) or Gln-tRNA(Gln) through the transamidation of misacylated Asp-tRNA(Asn) or Glu-tRNA(Gln) in organisms which lack either or both of asparaginyl-tRNA or glutaminyl-tRNA synthetases. The reaction takes place in the presence of glutamine and ATP through an activated phospho-Asp-tRNA(Asn) or phospho-Glu-tRNA(Gln). In Pseudarthrobacter chlorophenolicus (strain ATCC 700700 / DSM 12829 / CIP 107037 / JCM 12360 / KCTC 9906 / NCIMB 13794 / A6) (Arthrobacter chlorophenolicus), this protein is Aspartyl/glutamyl-tRNA(Asn/Gln) amidotransferase subunit B.